The primary structure comprises 423 residues: Phosphoribosylamine--glycine ligase (423 aa).

An ATP-grasp domain is found at 107-312; the sequence is KDLCARYDIP…LLPILYATAT (206 aa). 133 to 193 contacts ATP; sequence VRAQGAPIVI…EAFLDGEEAS (61 aa). The Mg(2+) site is built by E282 and N284.

Belongs to the GARS family. Mg(2+) serves as cofactor. It depends on Mn(2+) as a cofactor.

It carries out the reaction 5-phospho-beta-D-ribosylamine + glycine + ATP = N(1)-(5-phospho-beta-D-ribosyl)glycinamide + ADP + phosphate + H(+). Its pathway is purine metabolism; IMP biosynthesis via de novo pathway; N(1)-(5-phospho-D-ribosyl)glycinamide from 5-phospho-alpha-D-ribose 1-diphosphate: step 2/2. This chain is Phosphoribosylamine--glycine ligase, found in Agrobacterium fabrum (strain C58 / ATCC 33970) (Agrobacterium tumefaciens (strain C58)).